The following is a 163-amino-acid chain: Deoxyuridine 5'-triphosphate nucleotidohydrolase (163 aa).

The protein belongs to the dUTPase family. Mg(2+) serves as cofactor.

It catalyses the reaction dUTP + H2O = dUMP + diphosphate + H(+). The protein operates within pyrimidine metabolism; dUMP biosynthesis; dUMP from dCTP (dUTP route): step 2/2. Functionally, this enzyme is involved in nucleotide metabolism: it produces dUMP, the immediate precursor of thymidine nucleotides and it decreases the intracellular concentration of dUTP so that uracil cannot be incorporated into DNA. This is Deoxyuridine 5'-triphosphate nucleotidohydrolase from Galliformes (FAdV-8).